Reading from the N-terminus, the 610-residue chain is Diol dehydratase-reactivating factor large subunit (610 aa).

Residue 11–13 (NSS) participates in ATP binding. Residues threonine 105, aspartate 166, and aspartate 183 each contribute to the Mg(2+) site. ATP is bound by residues 459–462 (EEIK), 557–558 (GS), and arginine 591.

Belongs to the DdrA/PduG family. Component of the DDR complex, a heterotetramer of DdrA(2)/DdrB(2). The DDR complex interacts with the diol dehydratase complex in the presence of ADP but not ATP. Mg(2+) serves as cofactor.

It carries out the reaction ATP + H2O = ADP + phosphate + H(+). In terms of biological role, large subunit of the diol dehydratase-reactivating factor (DDR), which reactivates suicidally inhibited adenosylcobalamin-dependent diol dehydratase (DD, pddA, pddB, pddC). DDR acts as a chaperone, reactivating inactivated DD holoenzyme in the presence of ATP, Mg(2+) and free adenosylcobalamin (AdoCbl), by mediating the exchange of the tightly bound damaged cofactor AdoCbl for a free intact one. Reactivation takes place in two steps: ADP-dependent cobalamin release, then ATP-dependent dissociation of the DD apoenzyme-DDR complex. DDR has weak ATPase activity which is required for DD reactivation. This subunit contains the adenosine nucleotide binding site. Activates glycerol-inactivated, O2-inactivated holoenzyme and inactivated enzyme-cyanocobalamin complex. Also reactivates glycerol-inactivated hologlycerol dehydratase, a DD isozyme. The sequence is that of Diol dehydratase-reactivating factor large subunit from Klebsiella michiganensis (strain ATCC 8724 / DSM 4798 / JCM 20051 / NBRC 3318 / NRRL B-199 / KCTC 1686 / BUCSAV 143 / CCM 1901).